The chain runs to 520 residues: Fumarate hydratase, mitochondrial (520 aa).

Residues 1–39 (MASVAHISTAKAIFRAGGLPCRRLITPTLTGLPLKTHRM) constitute a mitochondrion transit peptide. Substrate contacts are provided by residues 153–155 (SGT), 184–187 (HPND), 194–196 (SSN), and Thr-242. The Proton donor/acceptor role is filled by His-243. Ser-373 is an active-site residue. Substrate-binding positions include Ser-374 and 379-381 (KVN).

This sequence belongs to the class-II fumarase/aspartase family. Fumarase subfamily. Homotetramer.

It localises to the mitochondrion matrix. It is found in the cytoplasm. The protein resides in the nucleus. It carries out the reaction (S)-malate = fumarate + H2O. It functions in the pathway carbohydrate metabolism; tricarboxylic acid cycle; (S)-malate from fumarate: step 1/1. Its function is as follows. Catalyzes the reversible stereospecific interconversion of fumarate to L-malate. In mitochondrion, catalyzes the hydration of fumarate to L-malate in the tricarboxylic acid (TCA) cycle to facilitate a transition step in the production of energy in the form of NADH. In cytoplasm and nucleus, involved in DNA repair in response to DNA damage: following DNA double-strand breaks (DSBs), translocates from the cytosol to the nucleus and promotes DNA repair by catalyzing the dehydration of L-malate to fumarate. The polypeptide is Fumarate hydratase, mitochondrial (fum1) (Schizosaccharomyces pombe (strain 972 / ATCC 24843) (Fission yeast)).